Reading from the N-terminus, the 361-residue chain is Peptide chain release factor 1 (361 aa).

Position 237 is an N5-methylglutamine (glutamine 237). The segment covering 285–296 (DEKRRSAEESTR) has biased composition (basic and acidic residues). A disordered region spans residues 285 to 305 (DEKRRSAEESTRRNLVSSGDR).

It belongs to the prokaryotic/mitochondrial release factor family. Methylated by PrmC. Methylation increases the termination efficiency of RF1.

It is found in the cytoplasm. In terms of biological role, peptide chain release factor 1 directs the termination of translation in response to the peptide chain termination codons UAG and UAA. The sequence is that of Peptide chain release factor 1 from Shewanella halifaxensis (strain HAW-EB4).